We begin with the raw amino-acid sequence, 466 residues long: MAKTLYEKLFDAHVVYEAENETPLLYIDRHLVHEVTSPQAFDGLRAHGRPVRQPGKTFATMDHNVSTQTKDINACGEMARIQMQELIKNCKEFGVELYDLNHPYQGIVHVMGPEQGVTLPGMTIVCGDSHTATHGAFGALAFGIGTSEVEHVLATQTLKQGRAKTMKIEVQGKAAPGITAKDIVLAIIGKTGSAGGTGHVVEFCGEAIRDLSMEGRMTLCNMAIEMGAKAGLVAPDETTFNYVKGRLHAPKGKDFDDAVAYWKTLQTDEGATFDTVVTLQAEEIAPQVTWGTNPGQVISVNDNIPDPASFADPVERASAEKALAYMGLKPGIPLTEVAIDKVFIGSCTNSRIEDLRAAAEIAKGRKVAPGVQALVVPGSGPVKAQAEAEGLDKIFIEAGFEWRLPGCSMCLAMNNDRLNPGERCASTSNRNFEGRQGRGGRTHLVSPAMAAAAAVTGHFADIRNIK.

[4Fe-4S] cluster is bound by residues Cys-347, Cys-407, and Cys-410.

It belongs to the aconitase/IPM isomerase family. LeuC type 1 subfamily. As to quaternary structure, heterodimer of LeuC and LeuD. The cofactor is [4Fe-4S] cluster.

The catalysed reaction is (2R,3S)-3-isopropylmalate = (2S)-2-isopropylmalate. It participates in amino-acid biosynthesis; L-leucine biosynthesis; L-leucine from 3-methyl-2-oxobutanoate: step 2/4. Functionally, catalyzes the isomerization between 2-isopropylmalate and 3-isopropylmalate, via the formation of 2-isopropylmaleate. The chain is 3-isopropylmalate dehydratase large subunit from Escherichia fergusonii (strain ATCC 35469 / DSM 13698 / CCUG 18766 / IAM 14443 / JCM 21226 / LMG 7866 / NBRC 102419 / NCTC 12128 / CDC 0568-73).